The following is a 621-amino-acid chain: Chaperone protein HscA homolog (621 aa).

This sequence belongs to the heat shock protein 70 family.

Chaperone involved in the maturation of iron-sulfur cluster-containing proteins. Has a low intrinsic ATPase activity which is markedly stimulated by HscB. This Polynucleobacter necessarius subsp. necessarius (strain STIR1) protein is Chaperone protein HscA homolog.